The sequence spans 421 residues: TITAN-like protein (421 aa).

The C2H2-type 1; degenerate zinc-finger motif lies at 11–32 (EFCTVCRFHHDQGSRHKYFPRH). The segment at 70 to 100 (VWCVFCDEDIVELGSSFACSKAINHFASSDH) adopts a C2H2-type 2; degenerate zinc-finger fold. A disordered region spans residues 279 to 306 (ISSSHSTDAGGNVHSGAPPPWLDANDGD). 2 consecutive short sequence motifs (nuclear localization signal) follow at residues 328–335 (NRKLNPNR) and 377–384 (TRKESRKE). A disordered region spans residues 376–421 (GTRKESRKEFEKEKRKLVKTESISTESEPVKIQPYISKRARRESGE). A compositionally biased stretch (basic and acidic residues) spans 377-389 (TRKESRKEFEKEK).

Also present in cotyledons, hypocotyls, stems, veins of sepals and stigmas, and actively dividing tissues such as shoot apical meristem, root tips and emerging true leaves. Weak expression in petals and anthers, and not detected in mature leaves. In seeds, expressed in both the endosperm and embryo.

Its subcellular location is the nucleus. Key regulator for endosperm and embryo nuclear divisions. The polypeptide is TITAN-like protein (Arabidopsis thaliana (Mouse-ear cress)).